Here is a 460-residue protein sequence, read N- to C-terminus: Probable protein phosphatase 2C 38 (460 aa).

Disordered regions lie at residues 1–30 and 83–111; these read MVAVTGGRPPGLQDAPGAPPPAPAAEAVPS and RPMRRRRRGGSSSSSSSPRDREPRDGRIA. Basic and acidic residues predominate over residues 100–109; the sequence is PRDREPRDGR. One can recognise a PPM-type phosphatase domain in the interval 118–432; it reads AASLYTMRGN…DDCAVVCLFL (315 aa). Mn(2+)-binding residues include D154 and G155. Positions 192 to 219 are disordered; the sequence is VTSSMTEGGGTERMDRDTETPLGTEENG. Residues 201-210 are compositionally biased toward basic and acidic residues; sequence GTERMDRDTE. Mn(2+) is bound by residues D377 and D423.

The protein belongs to the PP2C family. Mg(2+) is required as a cofactor. The cofactor is Mn(2+).

It catalyses the reaction O-phospho-L-seryl-[protein] + H2O = L-seryl-[protein] + phosphate. It carries out the reaction O-phospho-L-threonyl-[protein] + H2O = L-threonyl-[protein] + phosphate. This Oryza sativa subsp. japonica (Rice) protein is Probable protein phosphatase 2C 38.